A 347-amino-acid chain; its full sequence is 4-hydroxy-2-oxovalerate aldolase (347 aa).

A Pyruvate carboxyltransferase domain is found at 2 to 252; sequence ILISDATLRD…DTRTTFEHVM (251 aa). A substrate-binding site is contributed by 10–11; the sequence is RD. Residue D11 participates in Mn(2+) binding. H14 serves as the catalytic Proton acceptor. Residues S164 and H191 each contribute to the substrate site. Mn(2+) contacts are provided by H191 and H193.

Belongs to the 4-hydroxy-2-oxovalerate aldolase family.

It catalyses the reaction (S)-4-hydroxy-2-oxopentanoate = acetaldehyde + pyruvate. The protein is 4-hydroxy-2-oxovalerate aldolase (mhpE) of Burkholderia thailandensis (strain ATCC 700388 / DSM 13276 / CCUG 48851 / CIP 106301 / E264).